Reading from the N-terminus, the 240-residue chain is Probable transcriptional regulatory protein HPP12_0160 (240 aa).

Belongs to the TACO1 family.

The protein resides in the cytoplasm. The chain is Probable transcriptional regulatory protein HPP12_0160 from Helicobacter pylori (strain P12).